A 777-amino-acid polypeptide reads, in one-letter code: Elongation factor G, mitochondrial (777 aa).

Residues 34–338 (LRQRNVGISA…GMCAYLPNPM (305 aa)) form the tr-type G domain. GTP contacts are provided by residues 43–50 (AHIDSGKT), 136–140 (DTPGH), and 190–193 (NKMD).

Belongs to the TRAFAC class translation factor GTPase superfamily. Classic translation factor GTPase family. EF-G/EF-2 subfamily.

It localises to the mitochondrion. It functions in the pathway protein biosynthesis; polypeptide chain elongation. Mitochondrial GTPase that catalyzes the GTP-dependent ribosomal translocation step during translation elongation. During this step, the ribosome changes from the pre-translocational (PRE) to the post-translocational (POST) state as the newly formed A-site-bound peptidyl-tRNA and P-site-bound deacylated tRNA move to the P and E sites, respectively. Catalyzes the coordinated movement of the two tRNA molecules, the mRNA and conformational changes in the ribosome. The polypeptide is Elongation factor G, mitochondrial (Malassezia globosa (strain ATCC MYA-4612 / CBS 7966) (Dandruff-associated fungus)).